The chain runs to 463 residues: MSTGTVVQVIGAVVDVEFPQDAVPQVYDALKITGEGACNGLVLEVQQQLGGGVVRTIAMGSSDGLRRGLEVVNSGSPISVPVGTATLGRIMNVLGEPIDEAGPIGEEERYVIHRAAPSYEDQSNTTELLETGIKVIDLVCPFAKGGKVGLFGGAGVGKTVNMMELINNIAKAHSGLSVFAGVGERTREGNDFYYEMKDSGVLDKVAMVYGQMNEPPGNRLRVALSGLTMAEKFRDEGRDVLLFVDNIYRYTLAGTEVSALLGRMPSAVGYQPTLAEEMGVLQERITSTKTGSITSVQAVYVPADDLTDPSPATTFAHLDATVVLSRQIASLGIYPAVDPLDSTSRQLDPLVVGQEHYDVANGVQTVLQRYKELKDIIAILGMDELSDDDKTTVFRARKIERFLSQPFFVAEVFTGSPGKYVSLKDTIRGFKGILNGEFDHLPEQAFYMVGSIDEVIEKANKKK.

152 to 159 (GGAGVGKT) contributes to the ATP binding site.

It belongs to the ATPase alpha/beta chains family. F-type ATPases have 2 components, CF(1) - the catalytic core - and CF(0) - the membrane proton channel. CF(1) has five subunits: alpha(3), beta(3), gamma(1), delta(1), epsilon(1). CF(0) has three main subunits: a(1), b(2) and c(9-12). The alpha and beta chains form an alternating ring which encloses part of the gamma chain. CF(1) is attached to CF(0) by a central stalk formed by the gamma and epsilon chains, while a peripheral stalk is formed by the delta and b chains.

The protein localises to the cell inner membrane. It carries out the reaction ATP + H2O + 4 H(+)(in) = ADP + phosphate + 5 H(+)(out). Produces ATP from ADP in the presence of a proton gradient across the membrane. The catalytic sites are hosted primarily by the beta subunits. In Shewanella putrefaciens (strain CN-32 / ATCC BAA-453), this protein is ATP synthase subunit beta.